The primary structure comprises 69 residues: DNA-directed RNA polymerase subunit omega (69 aa).

The protein belongs to the RNA polymerase subunit omega family. As to quaternary structure, the RNAP catalytic core consists of 2 alpha, 1 beta, 1 beta' and 1 omega subunit. When a sigma factor is associated with the core the holoenzyme is formed, which can initiate transcription.

The catalysed reaction is RNA(n) + a ribonucleoside 5'-triphosphate = RNA(n+1) + diphosphate. Its function is as follows. Promotes RNA polymerase assembly. Latches the N- and C-terminal regions of the beta' subunit thereby facilitating its interaction with the beta and alpha subunits. The protein is DNA-directed RNA polymerase subunit omega of Pelotomaculum thermopropionicum (strain DSM 13744 / JCM 10971 / SI).